A 353-amino-acid polypeptide reads, in one-letter code: Zinc transporter 5 (353 aa).

Positions 1 to 27 are cleaved as a signal peptide; that stretch reads MATAAMTKVFVLLFLVAACYLPAHAAA. Residues 28–48 are Extracellular-facing; it reads AECDCATDTAGRDKAQALRLK. The helical transmembrane segment at 49–69 threads the bilayer; it reads VIAIFCILAGSTVGAALPSLG. Topologically, residues 70–86 are cytoplasmic; that stretch reads GRFPAIQPETDVFLSVK. The helical transmembrane segment at 87 to 107 threads the bilayer; sequence AFAGGVILATGLVHILPAAFE. The Extracellular portion of the chain corresponds to 108–121; the sequence is ALSSPCLVGGPWKR. A helical transmembrane segment spans residues 122-142; sequence FPFAGMVAMVSAIGTLIVDTV. Residues 143–198 lie on the Cytoplasmic side of the membrane; sequence ATGYFHRTDAKRKAAAVADEPADDLEASDEHSHGHAHGMSVMSVAPAGEEDLVRHR. A helical transmembrane segment spans residues 199-219; the sequence is VISQVLELGVVVHSLIIGMSL. Topologically, residues 220 to 230 are extracellular; that stretch reads GASDFPSTVRP. Residues 231–251 traverse the membrane as a helical segment; sequence LVPALTFHQFFEGIGLGGCIV. The Cytoplasmic segment spans residues 252–260; the sequence is QAKFRVRSV. Residues 261-281 traverse the membrane as a helical segment; sequence VTMALFFSLTTPAGIVVGIGI. Topologically, residues 282–292 are extracellular; the sequence is SSVYDANSPTA. A helical transmembrane segment spans residues 293-313; it reads LVVQGLLEAAAAGILVYMALV. The Cytoplasmic segment spans residues 314–332; the sequence is DILAEDFMKTKVQRRGRLQ. Residues 333–353 traverse the membrane as a helical segment; the sequence is LAMNVALLLGAGLMSMIAIWA.

The protein belongs to the ZIP transporter (TC 2.A.5) family.

The protein localises to the cell membrane. Its function is as follows. Zinc transporter that mediates zinc uptake from the rhizosphere and may be responsible for the translocation of zinc within the plant. This Oryza sativa subsp. japonica (Rice) protein is Zinc transporter 5 (ZIP5).